Reading from the N-terminus, the 66-residue chain is Kappa-flavitoxin (66 aa).

Intrachain disulfides connect Cys3/Cys21, Cys14/Cys42, Cys27/Cys31, Cys46/Cys58, and Cys59/Cys64.

This sequence belongs to the three-finger toxin family. Long-chain subfamily. Kappa-neurotoxin sub-subfamily. Homo- and heterodimer; non-covalently linked. As to expression, expressed by the venom gland.

It localises to the secreted. Functionally, postsynaptic neurotoxin that binds and inhibits neuronal nicotinic acetylcholine receptors (nAChR) with high affinity (IC(50)&lt;100 nM). Is a selective, and slowly reversible antagonist of alpha-3/CHRNA3-containing and some alpha-4/CHRNA4-containing AChRs. The chain is Kappa-flavitoxin from Bungarus flaviceps flaviceps (Red-headed krait).